The primary structure comprises 347 residues: MSENSIRLTQYSHGAGCGCKISPKVLETILHSEQAKFVDPNLLVGNETRDDAAVYDLGNGTSVISTTDFFMPIVDNPFDFGRIAATNAISDIFAMGGKPIMAIAILGWPINKLSPEIAREVTEGGRYACRQAGIALAGGHSIDAPEPIFGLAVTGIVPTERVKKNSTAQAGCKLFLTKPLGIGVLTTAEKKSLLKPEHQGLATEVMCRMNIAGASFANIEGVKAMTDVTGFGLLGHLSEMCQGAGVQARVDYEAIPKLPGVEEYIKLGAVPGGTERNFASYGHLMGEMPREVRDLLCDPQTSGGLLLAVMPEAENEVKTTAAEFGIELTAIGELVPARGGRAMVEIR.

The active site involves cysteine 17. ATP is bound by residues lysine 20 and threonine 48–aspartate 50. Aspartate 51 is a binding site for Mg(2+). ATP-binding positions include aspartate 68, aspartate 91, and glycine 139–serine 141. Aspartate 91 is a binding site for Mg(2+). Mg(2+) is bound at residue aspartate 227.

Belongs to the selenophosphate synthase 1 family. Class I subfamily. Homodimer. Mg(2+) is required as a cofactor.

The catalysed reaction is hydrogenselenide + ATP + H2O = selenophosphate + AMP + phosphate + 2 H(+). Its function is as follows. Synthesizes selenophosphate from selenide and ATP. The chain is Selenide, water dikinase from Shigella flexneri serotype 5b (strain 8401).